The following is a 166-amino-acid chain: Crossover junction endodeoxyribonuclease RuvC (166 aa).

Catalysis depends on residues aspartate 11, glutamate 71, and aspartate 142. 3 residues coordinate Mg(2+): aspartate 11, glutamate 71, and aspartate 142.

Belongs to the RuvC family. In terms of assembly, homodimer which binds Holliday junction (HJ) DNA. The HJ becomes 2-fold symmetrical on binding to RuvC with unstacked arms; it has a different conformation from HJ DNA in complex with RuvA. In the full resolvosome a probable DNA-RuvA(4)-RuvB(12)-RuvC(2) complex forms which resolves the HJ. Requires Mg(2+) as cofactor.

It is found in the cytoplasm. The catalysed reaction is Endonucleolytic cleavage at a junction such as a reciprocal single-stranded crossover between two homologous DNA duplexes (Holliday junction).. The RuvA-RuvB-RuvC complex processes Holliday junction (HJ) DNA during genetic recombination and DNA repair. Endonuclease that resolves HJ intermediates. Cleaves cruciform DNA by making single-stranded nicks across the HJ at symmetrical positions within the homologous arms, yielding a 5'-phosphate and a 3'-hydroxyl group; requires a central core of homology in the junction. The consensus cleavage sequence is 5'-(A/T)TT(C/G)-3'. Cleavage occurs on the 3'-side of the TT dinucleotide at the point of strand exchange. HJ branch migration catalyzed by RuvA-RuvB allows RuvC to scan DNA until it finds its consensus sequence, where it cleaves and resolves the cruciform DNA. The sequence is that of Crossover junction endodeoxyribonuclease RuvC from Maricaulis maris (strain MCS10) (Caulobacter maris).